Consider the following 83-residue polypeptide: Three-finger toxin MALT0052C (83 aa).

A signal peptide spans 1-21; that stretch reads MKTLLLTLVVVTIVCLDFGHT. Disulfide bonds link Cys24/Cys45, Cys38/Cys62, Cys64/Cys75, and Cys76/Cys81.

Belongs to the three-finger toxin family. Short-chain subfamily. Type I alpha-neurotoxin sub-subfamily. As to expression, expressed by the venom gland.

It is found in the secreted. Binds to muscle nicotinic acetylcholine receptor (nAChR) and inhibit acetylcholine from binding to the receptor, thereby impairing neuromuscular transmission. The chain is Three-finger toxin MALT0052C from Micrurus altirostris (Uruguayan coral snake).